Reading from the N-terminus, the 603-residue chain is NADH-ubiquinone oxidoreductase chain 5 (603 aa).

The next 16 helical transmembrane spans lie at 4–24 (YTTMTTLTLTPLILPILTTLI), 38–58 (SIIASTFIISLFPTTMFMCLD), 87–107 (MTFIPVALFVTWAIMEFSLWY), 122–142 (LIFLITMLILVTANNLFQLFI), 144–160 (WEGVGIMSFLLISWWYA), 171–191 (AILYNRIGDIGFILALAWFLL), 211–233 (TPLLGFLLAAAGKSAQLGLHPWL), 241–261 (TPVSALLHSSTMVVAGVFLLI), 272–292 (LIQTLTLCLGAITTLFAAICA), 301–320 (IVAFSTSSQLGLMMVTIGIN), 325–347 (AFLHICTHAFFKAMLFMCSGSII), 370–390 (STSLIIGSLALAGMPFLTGFY), 407–429 (WALSITLIATSLTSAYSTRMILL), 457–477 (LTIGSLFAGFFITNNILPMST), 482–502 (IPLYLKLTALSVTFLGLLTAL), and 583–603 (MIKLYFLSFLFPLILTLLLIM).

The protein belongs to the complex I subunit 5 family. In terms of assembly, core subunit of respiratory chain NADH dehydrogenase (Complex I) which is composed of 45 different subunits.

The protein resides in the mitochondrion inner membrane. The enzyme catalyses a ubiquinone + NADH + 5 H(+)(in) = a ubiquinol + NAD(+) + 4 H(+)(out). Functionally, core subunit of the mitochondrial membrane respiratory chain NADH dehydrogenase (Complex I) which catalyzes electron transfer from NADH through the respiratory chain, using ubiquinone as an electron acceptor. Essential for the catalytic activity and assembly of complex I. The polypeptide is NADH-ubiquinone oxidoreductase chain 5 (MT-ND5) (Pan paniscus (Pygmy chimpanzee)).